The following is a 30-amino-acid chain: Cysteine-rich venom protein hematin (30 aa).

The protein belongs to the CRISP family. In terms of processing, contains 8 disulfide bonds. In terms of tissue distribution, expressed by the venom gland.

It localises to the secreted. Functionally, inhibits calcium-activated potassium channels (KCa), voltage-gated potassium channel (Kv), and the calcium release channel/ryanodine receptor (RyR). This is Cysteine-rich venom protein hematin from Hemachatus haemachatus (Rinkhals).